The primary structure comprises 142 residues: Large ribosomal subunit protein bL17 (142 aa).

It belongs to the bacterial ribosomal protein bL17 family. In terms of assembly, part of the 50S ribosomal subunit. Contacts protein L32.

In Protochlamydia amoebophila (strain UWE25), this protein is Large ribosomal subunit protein bL17.